Consider the following 37-residue polypeptide: Cytochrome bd-I ubiquinol oxidase subunit X (37 aa).

Residues 4 to 24 traverse the membrane as a helical segment; that stretch reads FAWILGTLLACSFGVITALAL.

This sequence belongs to the cytochrome ubiquinol oxidase subunit X family. As to quaternary structure, may be a subunit of cytochrome bd-I ubiquinol oxidase. Probably interacts with CydA and CydB.

The protein resides in the cell inner membrane. It carries out the reaction 2 a ubiquinol + O2(in) + 4 H(+)(in) = 2 a ubiquinone + 2 H2O(in) + 4 H(+)(out). It participates in energy metabolism; oxidative phosphorylation. In terms of biological role, required for correct functioning of cytochrome bd-I oxidase. This protein and AppX may have some functional overlap. This Escherichia coli (strain K12) protein is Cytochrome bd-I ubiquinol oxidase subunit X (cydX).